The following is a 143-amino-acid chain: Pathogenesis-related protein P2 (143 aa).

An N-terminal signal peptide occupies residues M1–A23. A Barwin domain is found at Q24–C143. Cystine bridges form between C52/C84, C73/C107, and C87/C143.

The protein localises to the secreted. It is found in the cell wall. The polypeptide is Pathogenesis-related protein P2 (Solanum lycopersicum (Tomato)).